Reading from the N-terminus, the 446-residue chain is UDP-N-acetylmuramoylalanine--D-glutamate ligase (446 aa).

115–121 is a binding site for ATP; it reads GTNGKTT.

This sequence belongs to the MurCDEF family.

The protein localises to the cytoplasm. The enzyme catalyses UDP-N-acetyl-alpha-D-muramoyl-L-alanine + D-glutamate + ATP = UDP-N-acetyl-alpha-D-muramoyl-L-alanyl-D-glutamate + ADP + phosphate + H(+). It functions in the pathway cell wall biogenesis; peptidoglycan biosynthesis. Cell wall formation. Catalyzes the addition of glutamate to the nucleotide precursor UDP-N-acetylmuramoyl-L-alanine (UMA). In Trichlorobacter lovleyi (strain ATCC BAA-1151 / DSM 17278 / SZ) (Geobacter lovleyi), this protein is UDP-N-acetylmuramoylalanine--D-glutamate ligase.